Consider the following 560-residue polypeptide: 2-succinyl-5-enolpyruvyl-6-hydroxy-3-cyclohexene-1-carboxylate synthase (560 aa).

It belongs to the TPP enzyme family. MenD subfamily. Homodimer. Mg(2+) serves as cofactor. Mn(2+) is required as a cofactor. The cofactor is thiamine diphosphate.

The enzyme catalyses isochorismate + 2-oxoglutarate + H(+) = 5-enolpyruvoyl-6-hydroxy-2-succinyl-cyclohex-3-ene-1-carboxylate + CO2. It participates in quinol/quinone metabolism; 1,4-dihydroxy-2-naphthoate biosynthesis; 1,4-dihydroxy-2-naphthoate from chorismate: step 2/7. The protein operates within quinol/quinone metabolism; menaquinone biosynthesis. In terms of biological role, catalyzes the thiamine diphosphate-dependent decarboxylation of 2-oxoglutarate and the subsequent addition of the resulting succinic semialdehyde-thiamine pyrophosphate anion to isochorismate to yield 2-succinyl-5-enolpyruvyl-6-hydroxy-3-cyclohexene-1-carboxylate (SEPHCHC). The polypeptide is 2-succinyl-5-enolpyruvyl-6-hydroxy-3-cyclohexene-1-carboxylate synthase (Lactococcus lactis subsp. lactis (strain IL1403) (Streptococcus lactis)).